The primary structure comprises 331 residues: Tryptophan--tRNA ligase (331 aa).

Residues 10-12 (QPS) and 18-19 (GN) contribute to the ATP site. A 'HIGH' region motif is present at residues 11 to 19 (PSGQLTLGN). Asp-133 lines the L-tryptophan pocket. Residues 145–147 (GED), Val-184, and 193–197 (KMSKS) contribute to the ATP site. A 'KMSKS' region motif is present at residues 193–197 (KMSKS).

Belongs to the class-I aminoacyl-tRNA synthetase family. In terms of assembly, homodimer.

The protein localises to the cytoplasm. It carries out the reaction tRNA(Trp) + L-tryptophan + ATP = L-tryptophyl-tRNA(Trp) + AMP + diphosphate + H(+). Its function is as follows. Catalyzes the attachment of tryptophan to tRNA(Trp). The sequence is that of Tryptophan--tRNA ligase from Listeria innocua serovar 6a (strain ATCC BAA-680 / CLIP 11262).